Consider the following 219-residue polypeptide: Alpha N-terminal protein methyltransferase 1 (219 aa).

S-adenosyl-L-methionine-binding positions include G64, R69, 111 to 112, and Q127; that span reads LQ.

This sequence belongs to the methyltransferase superfamily. NTM1 family.

Its subcellular location is the cytoplasm. It catalyses the reaction N-terminal L-alanyl-L-prolyl-L-lysyl-[protein] + 3 S-adenosyl-L-methionine = N-terminal N,N,N-trimethyl-L-alanyl-L-prolyl-L-lysyl-[protein] + 3 S-adenosyl-L-homocysteine + 3 H(+). It carries out the reaction N-terminal L-seryl-L-prolyl-L-lysyl-[protein] + 3 S-adenosyl-L-methionine = N-terminal N,N,N-trimethyl-L-seryl-L-prolyl-L-lysyl-[protein] + 3 S-adenosyl-L-homocysteine + 3 H(+). The enzyme catalyses N-terminal L-prolyl-L-prolyl-L-lysyl-[protein] + 2 S-adenosyl-L-methionine = N-terminal N,N-dimethyl-L-prolyl-L-prolyl-L-lysyl-[protein] + 2 S-adenosyl-L-homocysteine + 2 H(+). Functionally, alpha-N-methyltransferase that methylates the N-terminus of target proteins containing the N-terminal motif [Ala/Pro/Ser]-Pro-Lys when the initiator Met is cleaved. Specifically catalyzes mono-, di- or tri-methylation of exposed alpha-amino group of Ala or Ser residue in the [Ala/Ser]-Pro-Lys motif and mono- or di-methylation of Pro in the Pro-Pro-Lys motif. In Schizosaccharomyces pombe (strain 972 / ATCC 24843) (Fission yeast), this protein is Alpha N-terminal protein methyltransferase 1 (tae1).